A 63-amino-acid polypeptide reads, in one-letter code: Anionic peptide NDBP7 (63 aa).

Residues 1–20 (MISRFCLLFLLVFVVSKIQA) form the signal peptide.

Belongs to the non-disulfide-bridged peptide (NDBP) superfamily. Long chain multifunctional peptide (group 2) family. As to expression, expressed by the venom gland.

The protein resides in the secreted. The polypeptide is Anionic peptide NDBP7 (Lychas mucronatus (Chinese swimming scorpion)).